The following is a 942-amino-acid chain: Protein inturned (942 aa).

Residues 1-13 (MADPARRDPRGRA) show a composition bias toward basic and acidic residues. 2 disordered regions span residues 1-54 (MADP…LEPE) and 129-150 (PKRH…KHQS). Residues 22 to 32 (SQEEEEEESDS) show a composition bias toward acidic residues. A compositionally biased stretch (low complexity) spans 33–48 (DAGASSLGSCSSASSD). A compositionally biased stretch (polar residues) spans 138-150 (SNTGPVSILKHQS). One can recognise a PDZ domain in the interval 189–267 (LVGVIHQTKW…PMQVKLTFEN (79 aa)). Residues Ser674 and Ser678 each carry the phosphoserine modification. Positions 707–752 (KARKPSPSRIGGGREPGEGEENVGLSPHTTPDTVRKQRESEGSDDN) are disordered.

Belongs to the inturned family. Component of the CPLANE (ciliogenesis and planar polarity effectors) complex, composed of INTU, FUZ and WDPCP. Interacts with CPLANE1. Interacts with NPHP4 and DAAM1; INTU is mediating the interaction between NPHP4 and DAAM1.

It is found in the cytoplasm. The protein localises to the cell surface. The protein resides in the cytoskeleton. It localises to the cilium basal body. Its subcellular location is the microtubule organizing center. It is found in the centrosome. The protein localises to the centriole. Plays a key role in ciliogenesis and embryonic development. Regulator of cilia formation by controlling the organization of the apical actin cytoskeleton and the positioning of the basal bodies at the apical cell surface, which in turn is essential for the normal orientation of elongating ciliary microtubules. Plays a key role in definition of cell polarity via its role in ciliogenesis but not via conversion extension. Has an indirect effect on hedgehog signaling. Proposed to function as core component of the CPLANE (ciliogenesis and planar polarity effectors) complex involved in the recruitment of peripheral IFT-A proteins to basal bodies. Required for recruitment of CPLANE2 to the mother centriole. Binds phosphatidylinositol 3-phosphate with highest affinity, followed by phosphatidylinositol 4-phosphate and phosphatidylinositol 5-phosphate. The polypeptide is Protein inturned (Intu) (Rattus norvegicus (Rat)).